The sequence spans 434 residues: Galactofuranosyl glycosyltransferase (434 aa).

Residues 1-18 are Cytoplasmic-facing; sequence MAPPRWHHDRRRMAIFVR. Residues 19–38 traverse the membrane as a helical; Signal-anchor for type II membrane protein segment; it reads VGLYTLLFLMGYVVPLIIFY. 4 N-linked (GlcNAc...) asparagine glycosylation sites follow: asparagine 39, asparagine 100, asparagine 162, and asparagine 388. Residues 39 to 434 are Lumenal-facing; it reads NRSRADTFED…KLLDFPVDPS (396 aa).

Belongs to the glycosyltransferase 2 family.

The protein localises to the endoplasmic reticulum membrane. Its pathway is glycolipid biosynthesis; glycosylphosphatidylinositol-anchor biosynthesis. Functionally, glycosyltransferase that may be responsible for the addition of galactofuranosyl residues to the nascent lipophosphoglycan (LPG) chain. It could alternatively be involved in the synthesis of the galactofuranosyl donor. The protein is Galactofuranosyl glycosyltransferase (LPG1) of Leishmania donovani.